A 180-amino-acid polypeptide reads, in one-letter code: Shikimate kinase (180 aa).

ATP is bound at residue 19–24 (GAGKTT). Threonine 23 provides a ligand contact to Mg(2+). Substrate-binding residues include aspartate 41, arginine 65, and glycine 87. ATP is bound at residue arginine 125. Residue arginine 144 participates in substrate binding.

It belongs to the shikimate kinase family. As to quaternary structure, monomer. The cofactor is Mg(2+).

The protein localises to the cytoplasm. The catalysed reaction is shikimate + ATP = 3-phosphoshikimate + ADP + H(+). The protein operates within metabolic intermediate biosynthesis; chorismate biosynthesis; chorismate from D-erythrose 4-phosphate and phosphoenolpyruvate: step 5/7. Catalyzes the specific phosphorylation of the 3-hydroxyl group of shikimic acid using ATP as a cosubstrate. The protein is Shikimate kinase of Acinetobacter baumannii (strain SDF).